The following is a 308-amino-acid chain: MQELRLVLILVGALAIAALLFHGLWTSRKETSSKFGKKVDIDFDSESEDEQPTPARGFEQPKESVVDVRQERKEPAFGRDEPNLSQDPLFDGGTDAILKQNAEEKEVEPKVIEEPIMTRPSISESMVKEEPTISFSAIDDVEPTFHKESSVVPAPVEPVIIPEIEPEVVPEPEEDVIVINVHGMGNERFNGNRLFNSLEQNGLIFGDMAIYHRHSDLAGSGKVVFSTANMVAPGHFQVPEGEEFSTPGISFFLPLPCNGEADYNFKLMLQTAQLVASELGGNVLDEKRNMLTPNKIDEYKQRVKVFCN.

Residues 1–5 lie on the Periplasmic side of the membrane; that stretch reads MQELR. The helical transmembrane segment at 6–26 threads the bilayer; it reads LVLILVGALAIAALLFHGLWT. The Cytoplasmic segment spans residues 27-308; it reads SRKETSSKFG…YKQRVKVFCN (282 aa). The tract at residues 43 to 90 is disordered; that stretch reads FDSESEDEQPTPARGFEQPKESVVDVRQERKEPAFGRDEPNLSQDPLF. Basic and acidic residues predominate over residues 59-82; sequence EQPKESVVDVRQERKEPAFGRDEP.

Belongs to the ZipA family. As to quaternary structure, interacts with FtsZ via their C-terminal domains.

The protein resides in the cell inner membrane. Essential cell division protein that stabilizes the FtsZ protofilaments by cross-linking them and that serves as a cytoplasmic membrane anchor for the Z ring. Also required for the recruitment to the septal ring of downstream cell division proteins. This is Cell division protein ZipA from Aliivibrio salmonicida (strain LFI1238) (Vibrio salmonicida (strain LFI1238)).